The primary structure comprises 437 residues: Perilipin-2 (437 aa).

Residue alanine 2 is modified to N-acetylalanine. Serine 215 is subject to Phosphoserine. Phosphotyrosine is present on tyrosine 232. The segment at 412–437 is disordered; it reads SQNAQDQGAEMDKSSQETQRSEHKTH. The segment covering 421 to 437 has biased composition (basic and acidic residues); the sequence is EMDKSSQETQRSEHKTH.

It belongs to the perilipin family. Interacts with IRGC. Acylated; primarily with C14, C16 and C18 fatty acids. Post-translationally, phosphorylation at Tyr-232 by isoform 1 of CHKA (CHKalpha2) promotes dissociation from lipid droplets: dissociation is followed by recruitment of autophagosome machinery to lipid droplets and subsequent lipid droplet lipolysis. In terms of processing, polyubiquitination of Nt-acetylatable A-PLIN2 by MARCHF6 lead to degradation by 26S proteasomes. Milk lipid globules.

The protein localises to the membrane. It localises to the lipid droplet. Structural component of lipid droplets, which is required for the formation and maintenance of lipid storage droplets. The sequence is that of Perilipin-2 from Homo sapiens (Human).